The chain runs to 202 residues: Ribonuclease HII (202 aa).

The RNase H type-2 domain occupies 13–202; that stretch reads KIEAGLDEAG…HFKPKQLDLF (190 aa). Residues Asp19, Glu20, and Asp112 each contribute to the a divalent metal cation site.

This sequence belongs to the RNase HII family. The cofactor is Mn(2+). Mg(2+) is required as a cofactor.

It is found in the cytoplasm. The catalysed reaction is Endonucleolytic cleavage to 5'-phosphomonoester.. Endonuclease that specifically degrades the RNA of RNA-DNA hybrids. The sequence is that of Ribonuclease HII from Cytophaga hutchinsonii (strain ATCC 33406 / DSM 1761 / CIP 103989 / NBRC 15051 / NCIMB 9469 / D465).